The sequence spans 1209 residues: Calcium-activated potassium channel subunit alpha-1 (1209 aa).

Residues 1–23 (MANGGGGGGGSSGGGGGGGGGSG) show a composition bias toward gly residues. A disordered region spans residues 1–61 (MANGGGGGGG…SSSSSSSSSV (61 aa)). Residues 1 to 86 (MANGGGGGGG…VPCDSRGQRM (86 aa)) are Extracellular-facing. Over residues 25 to 39 (RMSSNIHANNLSLDA) the composition is skewed to polar residues. Over residues 40–60 (SSSSSSSSSSSSSSSSSSSSS) the composition is skewed to low complexity. A helical transmembrane segment spans residues 87–107 (WWAFLASSMVTFFGGLFIILL). Residues 108-178 (WRTLKYLWTV…MISAQTLTGR (71 aa)) lie on the Cytoplasmic side of the membrane. S-palmitoyl cysteine attachment occurs at residues cysteine 118, cysteine 119, and cysteine 121. A helical transmembrane segment spans residues 179 to 199 (VLVVLVFALSIGALVIYFIDS). Residues 200–214 (SNPIESCQNFYKDFT) lie on the Extracellular side of the membrane. A helical transmembrane segment spans residues 215–235 (LQIDMAFNVFFLLYFGLRFIA). The Cytoplasmic portion of the chain corresponds to 236–239 (ANDK). A helical transmembrane segment spans residues 240-260 (LWFWLEVNSVVDFFTVPPVFV). At 261–264 (SVYL) the chain is on the extracellular side. Residues 265-285 (NRSWLGLRFLRALRLIQFSEI) traverse the membrane as a helical; Voltage-sensor segment. Residues 286–300 (LQFLNILKTSNSIKL) lie on the Cytoplasmic side of the membrane. Residues 301–321 (VNLLSIFISTWLTAAGFIHLV) traverse the membrane as a helical segment. At 322–335 (ENSGDPWENFQNNQ) the chain is on the extracellular side. Residues 336–358 (ALTYWECVYLLMVTMSTVGYGDV) constitute an intramembrane region (pore-forming). Positions 352–355 (TVGY) match the Selectivity for potassium motif. Over 359–367 (YAKTTLGRL) the chain is Extracellular. Residues 368–388 (FMVFFILGGLAMFASYVPEII) form a helical membrane-spanning segment. Topologically, residues 389–1209 (ELIGNRKKYG…KQNRKEMVYR (821 aa)) are cytoplasmic. One can recognise an RCK N-terminal 1 domain in the interval 407 to 549 (RKHIVVCGHI…WNWKEGDDAI (143 aa)). Mg(2+) contacts are provided by glutamate 439, glutamine 462, and glutamate 464. The segment S7 stretch occupies residues 556–576 (LGFIAQSCLAQGLSTMLANLF). Residues 613-633 (LSFPTVCELCFVKLKLLMIAI) are segment S8. The residue at position 670 (aspartate 670) is a Phosphothreonine. Lysine 672 is modified (phosphoserine). A heme-binding motif region spans residues 681–685 (CKACH). Residues 703–733 (EDEQPPTLSPKKKQRNGGMRNSPNTSPKLMR) form a disordered region. Threonine 709 bears the Phosphothreonine mark. Phosphoserine occurs at positions 711, 724, and 728. The segment S9 stretch occupies residues 783-803 (VLSGHVVVCIFGDVSSALIGL). One can recognise an RCK N-terminal 2 domain in the interval 785–929 (SGHVVVCIFG…MDRSSPDNSP (145 aa)). At threonine 916 the chain carries Phosphothreonine. Phosphoserine occurs at positions 924 and 928. The Calcium bowl signature appears at 976–998 (TELVNDTNVQFLDQDDDDDPDTE). Ca(2+) contacts are provided by glutamine 985, aspartate 988, aspartate 991, and aspartate 993. The tract at residues 1005–1025 (FACGTAFAVSVLDSLMSATYF) is segment S10. Low complexity predominate over residues 1159–1184 (RASLSHSSHSSQSSSKKSSSVHSIPS). The interval 1159 to 1209 (RASLSHSSHSSQSSSKKSSSVHSIPSTANRPNRPKSRESRDKQNRKEMVYR) is disordered. The segment covering 1193–1209 (KSRESRDKQNRKEMVYR) has biased composition (basic and acidic residues). Phosphoserine is present on residues serine 1194 and serine 1197.

This sequence belongs to the potassium channel family. Calcium-activated (TC 1.A.1.3) subfamily. KCa1.1/KCNMA1 sub-subfamily. Homotetramer; which constitutes the calcium-activated potassium channel. Interacts with beta subunits KCNMB1, KCNMB2, KCNMB3 and KCNMB4. Interacts with gamma subunits LRRC26, LRRC38, LRRC52 and LRRC55. Beta and gamma subunits are accessory, and modulate its activity. Interacts with RAB11B. Phosphorylated. Phosphorylation by kinases such as PKA and/or PKG. In smooth muscles, phosphorylation affects its activity. Post-translationally, palmitoylation by ZDHHC22 and ZDHHC23 within the intracellular linker between the S0 and S1 transmembrane domains regulates localization to the plasma membrane. Depalmitoylated by LYPLA1 and LYPLAL1, leading to retard exit from the trans-Golgi network.

It localises to the cell membrane. The catalysed reaction is K(+)(in) = K(+)(out). Ethanol and carbon monoxide-bound heme increase channel activation. Heme inhibits channel activation. Functionally, potassium channel activated by both membrane depolarization or increase in cytosolic Ca(2+) that mediates export of K(+). It is also activated by the concentration of cytosolic Mg(2+). Its activation dampens the excitatory events that elevate the cytosolic Ca(2+) concentration and/or depolarize the cell membrane. It therefore contributes to repolarization of the membrane potential. Plays a key role in controlling excitability in a number of systems, such as regulation of the contraction of smooth muscle, the tuning of hair cells in the cochlea, regulation of transmitter release, and innate immunity. In smooth muscles, its activation by high level of Ca(2+), caused by ryanodine receptors in the sarcoplasmic reticulum, regulates the membrane potential. In cochlea cells, its number and kinetic properties partly determine the characteristic frequency of each hair cell and thereby helps to establish a tonotopic map. Kinetics of KCNMA1 channels are determined by alternative splicing, phosphorylation status and its combination with modulating beta subunits. Highly sensitive to both iberiotoxin (IbTx) and charybdotoxin (CTX). Potassium channel activated by both membrane depolarization or increase in cytosolic Ca(2+) that mediates export of K(+). The protein is Calcium-activated potassium channel subunit alpha-1 (Kcnma1) of Mus musculus (Mouse).